Here is a 364-residue protein sequence, read N- to C-terminus: Aminomethyltransferase (364 aa).

The protein belongs to the GcvT family. The glycine cleavage system is composed of four proteins: P, T, L and H.

It carries out the reaction N(6)-[(R)-S(8)-aminomethyldihydrolipoyl]-L-lysyl-[protein] + (6S)-5,6,7,8-tetrahydrofolate = N(6)-[(R)-dihydrolipoyl]-L-lysyl-[protein] + (6R)-5,10-methylene-5,6,7,8-tetrahydrofolate + NH4(+). Its function is as follows. The glycine cleavage system catalyzes the degradation of glycine. The sequence is that of Aminomethyltransferase from Escherichia coli O127:H6 (strain E2348/69 / EPEC).